The chain runs to 81 residues: Large ribosomal subunit protein bL31B (81 aa).

The protein belongs to the bacterial ribosomal protein bL31 family. Type B subfamily. As to quaternary structure, part of the 50S ribosomal subunit.

The chain is Large ribosomal subunit protein bL31B from Cutibacterium acnes (strain DSM 16379 / KPA171202) (Propionibacterium acnes).